Reading from the N-terminus, the 31-residue chain is U1-theraphotoxin-Cv1a (31 aa).

Intrachain disulfides connect C2–C16, C9–C21, and C15–C28.

Expressed by the venom gland.

It is found in the secreted. Functionally, insecticidal toxin that induces reversible paralysis in crickets but not in cockroaches and mice. Molecular target unknown. This chain is U1-theraphotoxin-Cv1a, found in Coremiocnemis valida (Singapore tarantula).